The primary structure comprises 325 residues: Delta(1)-pyrroline-2-carboxylate reductase (325 aa).

Belongs to the ornithine cyclodeaminase/mu-crystallin family.

It catalyses the reaction L-proline + NAD(+) = 1-pyrroline-2-carboxylate + NADH + H(+). It carries out the reaction L-proline + NADP(+) = 1-pyrroline-2-carboxylate + NADPH + H(+). In terms of biological role, catalyzes the reduction of Delta(1)-pyrroline-2-carboxylate (Pyr2C) to L-proline, using preferentially NADPH over NADH as the electron donor. Is likely involved in a degradation pathway that converts trans-3-hydroxy-L-proline (t3LHyp) to L-proline, which allows B.cereus to grow on t3LHyp as a sole carbon source. This Bacillus cereus (strain ATCC 14579 / DSM 31 / CCUG 7414 / JCM 2152 / NBRC 15305 / NCIMB 9373 / NCTC 2599 / NRRL B-3711) protein is Delta(1)-pyrroline-2-carboxylate reductase.